Here is a 963-residue protein sequence, read N- to C-terminus: Transcription factor cbf12 (963 aa).

2 disordered regions span residues 130–207 and 248–289; these read NPSN…SQGL and VNMN…PPQK. 2 stretches are compositionally biased toward polar residues: residues 143–207 and 249–289; these read FENN…SQGL and NMNS…PPQK.

It belongs to the Su(H) family.

Its subcellular location is the nucleus. Its function is as follows. Transcription factor which function may be to trigger the increase of adhesion at stationary phase, possibly by counteracting or replacing cbf11 at the respective promoters. May also play a cbf11-antagonistic role in the regulation of a number of other important processes such as extracellular material production, colony morphogenesis, ploidy maintenance, or meiosis. The sequence is that of Transcription factor cbf12 (cbf12) from Schizosaccharomyces pombe (strain 972 / ATCC 24843) (Fission yeast).